The sequence spans 307 residues: Myeloid-associated differentiation marker-like protein 2 (307 aa).

2 MARVEL domains span residues 17–154 and 159–303; these read AVTS…ARPG and YMAT…RIRF. 7 helical membrane passes run 53–73, 90–110, 129–149, 163–183, 198–218, 232–252, and 278–298; these read FCMA…ACEF, AFAM…PLYF, LAAS…VALT, VSGL…GALV, VAVY…SVMG, VVYT…WPVF, and LVVA…LAYS.

This sequence belongs to the MAL family.

Its subcellular location is the membrane. This chain is Myeloid-associated differentiation marker-like protein 2 (Myadml2), found in Rattus norvegicus (Rat).